A 20-amino-acid chain; its full sequence is Peroxidase 1 (20 aa).

Histidine 14 lines the heme pocket. Threonine 15 provides a ligand contact to Ca(2+).

The protein belongs to the peroxidase family. Classical plant (class III) peroxidase subfamily. The cofactor is Ca(2+). Requires heme b as cofactor.

It localises to the secreted. The catalysed reaction is 2 a phenolic donor + H2O2 = 2 a phenolic radical donor + 2 H2O. In terms of biological role, removal of H(2)O(2), oxidation of toxic reductants, biosynthesis and degradation of lignin, suberization, auxin catabolism, response to environmental stresses such as wounding, pathogen attack and oxidative stress. These functions might be dependent on each isozyme/isoform in each plant tissue. This chain is Peroxidase 1, found in Betula pendula (European white birch).